A 162-amino-acid chain; its full sequence is Ribosome maturation factor RimP (162 aa).

The protein belongs to the RimP family.

It is found in the cytoplasm. Its function is as follows. Required for maturation of 30S ribosomal subunits. The polypeptide is Ribosome maturation factor RimP (Leptospira biflexa serovar Patoc (strain Patoc 1 / Ames)).